The primary structure comprises 471 residues: Alpha-galactosidase (471 aa).

The N-terminal stretch at 1 to 18 (MFLLYLFTSFAAVSGVLG) is a signal peptide. The cysteines at positions 42 and 74 are disulfide-linked. Positions 72 and 73 each coordinate substrate. N-linked (GlcNAc...) asparagine glycosylation is present at Asn-82. Cysteines 121 and 151 form a disulfide. Lys-147 contacts substrate. Asp-149 acts as the Nucleophile in catalysis. Asn-175 carries N-linked (GlcNAc...) asparagine glycosylation. Arg-205 lines the substrate pocket. Asp-209 (proton donor) is an active-site residue. 2 disulfide bridges follow: Cys-221/Cys-237 and Cys-223/Cys-230. A substrate-binding site is contributed by Gln-251. N-linked (GlcNAc...) asparagine glycosylation is found at Asn-270, Asn-403, Asn-412, Asn-417, Asn-422, Asn-435, and Asn-454.

This sequence belongs to the glycosyl hydrolase 27 family. Homotetramer.

Its subcellular location is the secreted. It carries out the reaction Hydrolysis of terminal, non-reducing alpha-D-galactose residues in alpha-D-galactosides, including galactose oligosaccharides, galactomannans and galactolipids.. In Saccharomyces pastorianus (strain ATCC 76529 / Carlsberg bottom yeast no.1 / CBS 1513 / CLIB 176 / NBRC 1167 / NCYC 396 / NRRL Y-12693) (Saaz-type lager yeast), this protein is Alpha-galactosidase (MEL).